The primary structure comprises 258 residues: Snake venom serine protease KN12 (258 aa).

Residues 1–18 (MVLIRVLANLLILQLSYA) form the signal peptide. A propeptide spanning residues 19-24 (QRSSEL) is cleaved from the precursor. The region spanning 25–249 (VIGGDECNIN…HLDWIQNIIA (225 aa)) is the Peptidase S1 domain. Intrachain disulfides connect C31/C163, C50/C66, C98/C256, C142/C210, C174/C189, and C200/C225. The active-site Charge relay system is H65. N103 carries N-linked (GlcNAc...) asparagine glycosylation. D110 acts as the Charge relay system in catalysis. N-linked (GlcNAc...) asparagine glycosylation is found at N121, N122, N154, and N170. The Charge relay system role is filled by S204. A glycan (N-linked (GlcNAc...) asparagine) is linked at N251.

This sequence belongs to the peptidase S1 family. Snake venom subfamily. Monomer. Expressed by the venom gland.

It localises to the secreted. In terms of biological role, snake venom serine protease that may act in the hemostasis system of the prey. The polypeptide is Snake venom serine protease KN12 (Trimeresurus stejnegeri (Chinese green tree viper)).